We begin with the raw amino-acid sequence, 75 residues long: Cytochrome c oxidase assembly factor 5 (75 aa).

One can recognise a CHCH domain in the interval Gln28 to Arg66. A Cx10C motif motif is present at residues Cys31–Cys42. 2 cysteine pairs are disulfide-bonded: Cys31–Cys58 and Cys42–Cys48. The short motif at Cys48–Cys58 is the Cx9C motif element.

Belongs to the PET191 family.

Its function is as follows. Involved in an early step of the mitochondrial complex IV assembly process. The protein is Cytochrome c oxidase assembly factor 5 (coa5) of Danio rerio (Zebrafish).